Consider the following 429-residue polypeptide: Phosphomethylpyrimidine synthase (429 aa).

Substrate-binding positions include N66, M95, Y124, H163, 185-187 (SRG), 226-229 (DGLR), and E265. Position 269 (H269) interacts with Zn(2+). Y292 is a substrate binding site. H333 lines the Zn(2+) pocket. Residues C409, C412, and C416 each coordinate [4Fe-4S] cluster.

Belongs to the ThiC family. It depends on [4Fe-4S] cluster as a cofactor.

It carries out the reaction 5-amino-1-(5-phospho-beta-D-ribosyl)imidazole + S-adenosyl-L-methionine = 4-amino-2-methyl-5-(phosphooxymethyl)pyrimidine + CO + 5'-deoxyadenosine + formate + L-methionine + 3 H(+). Its pathway is cofactor biosynthesis; thiamine diphosphate biosynthesis. In terms of biological role, catalyzes the synthesis of the hydroxymethylpyrimidine phosphate (HMP-P) moiety of thiamine from aminoimidazole ribotide (AIR) in a radical S-adenosyl-L-methionine (SAM)-dependent reaction. This chain is Phosphomethylpyrimidine synthase, found in Carboxydothermus hydrogenoformans (strain ATCC BAA-161 / DSM 6008 / Z-2901).